We begin with the raw amino-acid sequence, 239 residues long: MRPSGRAADALRSISLTRHYTRHAEGSVLCAFGDTKVLCTASVLAKVPPHKKGSGEGWVTAEYGMLPRATHTRSDREAARGKQTGRTQEIQRLIGRAMRSVFDLAALGEYTLHLDCDVLQADGGTRTAAITGAFVAAHDAVATMLRDGLIAASPIRDHVAAVSVGMVDGVPVLDLDYAEDSNCDTDMNVVMTGSGGFVEVQGTAEGAPFSRADLDAMTRLAEAGIARLVQYQREALGLA.

Phosphate is bound by residues arginine 86 and 124–126; that span reads GTR.

It belongs to the RNase PH family. As to quaternary structure, homohexameric ring arranged as a trimer of dimers.

It carries out the reaction tRNA(n+1) + phosphate = tRNA(n) + a ribonucleoside 5'-diphosphate. In terms of biological role, phosphorolytic 3'-5' exoribonuclease that plays an important role in tRNA 3'-end maturation. Removes nucleotide residues following the 3'-CCA terminus of tRNAs; can also add nucleotides to the ends of RNA molecules by using nucleoside diphosphates as substrates, but this may not be physiologically important. Probably plays a role in initiation of 16S rRNA degradation (leading to ribosome degradation) during starvation. This is Ribonuclease PH from Cupriavidus taiwanensis (strain DSM 17343 / BCRC 17206 / CCUG 44338 / CIP 107171 / LMG 19424 / R1) (Ralstonia taiwanensis (strain LMG 19424)).